The sequence spans 134 residues: Large ribosomal subunit protein bL19 (134 aa).

The interval 110–134 is disordered; the sequence is ARLHQEEGPSSAAPASTPPAAAPQA. Residues 125-134 show a composition bias toward pro residues; it reads STPPAAAPQA.

It belongs to the bacterial ribosomal protein bL19 family.

Its function is as follows. This protein is located at the 30S-50S ribosomal subunit interface and may play a role in the structure and function of the aminoacyl-tRNA binding site. The protein is Large ribosomal subunit protein bL19 of Anaeromyxobacter sp. (strain Fw109-5).